We begin with the raw amino-acid sequence, 48 residues long: Small, acid-soluble spore protein P (48 aa).

The span at 1 to 12 (MTNKNDGKDMRK) shows a compositional bias: basic and acidic residues. Positions 1–48 (MTNKNDGKDMRKNAPKGAQPGQPEPLSGSKKVKNRNHTRQKHNSSHDM) are disordered. The segment covering 30–48 (KKVKNRNHTRQKHNSSHDM) has biased composition (basic residues).

This sequence belongs to the SspP family.

Its subcellular location is the spore core. The protein is Small, acid-soluble spore protein P of Bacillus licheniformis (strain ATCC 14580 / DSM 13 / JCM 2505 / CCUG 7422 / NBRC 12200 / NCIMB 9375 / NCTC 10341 / NRRL NRS-1264 / Gibson 46).